We begin with the raw amino-acid sequence, 64 residues long: Antimicrobial peptide THP2 (64 aa).

The signal sequence occupies residues 1 to 28; sequence MRILYLLFSLLFLALQVSPGLSSPKRDM. 3 cysteine pairs are disulfide-bonded: Cys-31/Cys-57, Cys-36/Cys-51, and Cys-41/Cys-58.

In terms of tissue distribution, expressed in circulating heterophil granulocytes and bone marrow (at protein level).

It is found in the secreted. Functionally, antibacterial activity against the Gram-positive bacterium Staphylococcus aureus. Lacks antibacterial activity against the Gram-negative bacterium E.coli K-12. In Meleagris gallopavo (Wild turkey), this protein is Antimicrobial peptide THP2.